A 155-amino-acid polypeptide reads, in one-letter code: Movement protein TGB3 (155 aa).

The Cytoplasmic segment spans residues 1–59 (MAMPHPLECCCPQCLPSSESFPIYGEQEIPCSETQAETTPVEKTVRANVLTDILDDHYY). Residues 60-80 (AILASLFIIALWLLYIYLSSI) traverse the membrane as a helical segment. Residues 81-130 (PTETGPYFYQDLNSVKIYGIGATNPEVIAAIHHWQKYPFGESPMWGGLIS) are Lumenal-facing. Residues 89-93 (YQDLN) carry the Involved in plasmodesmata targeting and virus cell-to-cell movement motif. The chain crosses the membrane as a helical span at residues 131 to 151 (VLSILLKPLTLVFALSFFLLL). The segment at 150–155 (LLSSKR) is required for attachment to the host plasmodesmata-associated membrane compartments. Residues 152–155 (SSKR) lie on the Cytoplasmic side of the membrane.

Belongs to the virgaviridae TGB3 movement protein family. In terms of assembly, interacts with movement proteins TGB1 and TGB2. TGB1-TGB3-TGB2 complex formation is enhanced by ATP hydrolysis.

It is found in the host cell junction. The protein localises to the host plasmodesma. It localises to the host endoplasmic reticulum membrane. Its subcellular location is the host cytoplasm. The protein resides in the host cytoskeleton. In terms of biological role, participates in the transport of viral genome to neighboring plant cells directly through plasmodesmata, without any budding. TGBp2 and TGBp3 are necessary for intracellular delivery of TGBp1-containing vRNPs to plasmodesmata. Can gate plasmodesmata and increase their size exclusion limit. Induces host actin cytoskeleton network thickening, which probably plays a major role in virus cell-to-cell movement. This Hordeum vulgare (Barley) protein is Movement protein TGB3.